The following is a 97-amino-acid chain: Small integral membrane protein 8 (97 aa).

Residues 1 to 22 (MSSAPEPPAFKKEPPKEKDLGN) are disordered. Residues 9 to 20 (AFKKEPPKEKDL) show a composition bias toward basic and acidic residues. A helical transmembrane segment spans residues 48 to 70 (PVMAFGLITISLCVAYIGYLHAT).

Belongs to the SMIM8 family.

It localises to the membrane. The sequence is that of Small integral membrane protein 8 (SMIM8) from Bos taurus (Bovine).